We begin with the raw amino-acid sequence, 157 residues long: Ribosome maturation factor RimP (157 aa).

The protein belongs to the RimP family.

The protein localises to the cytoplasm. Functionally, required for maturation of 30S ribosomal subunits. The protein is Ribosome maturation factor RimP of Helicobacter hepaticus (strain ATCC 51449 / 3B1).